A 142-amino-acid polypeptide reads, in one-letter code: MKTFTAKPETVKRDWFVVDAAGQTLGRLATEIASRLRGKHKPEYTPHVDTGDYIVVINAEQVRVTGAKTTDKMYYSHSGFPGGIKSINFEKLIAKAPERVIETAVKGMLPKNPLGRDMYRKLKVYAGAAHPHTAQQPQELKI.

It belongs to the universal ribosomal protein uL13 family. As to quaternary structure, part of the 50S ribosomal subunit.

Its function is as follows. This protein is one of the early assembly proteins of the 50S ribosomal subunit, although it is not seen to bind rRNA by itself. It is important during the early stages of 50S assembly. The protein is Large ribosomal subunit protein uL13 of Pseudomonas fluorescens (strain ATCC BAA-477 / NRRL B-23932 / Pf-5).